Here is a 1596-residue protein sequence, read N- to C-terminus: SET-binding protein (1596 aa).

The segment covering 1–12 (MESRETLSSSRQ) has biased composition (polar residues). 3 disordered regions span residues 1–83 (MESR…WVAG), 134–426 (KQSG…SIKA), and 475–518 (SPSV…SRKL). Over residues 64–81 (GSGRDVDSNSNADSEKWV) the composition is skewed to basic and acidic residues. A compositionally biased stretch (low complexity) spans 164 to 175 (LTASDLAASDLK). 2 stretches are compositionally biased toward polar residues: residues 213-236 (KSSS…QNCF) and 270-282 (AGNT…NNNK). Over residues 290–306 (APSPSSHSSPAPPSSSA) the composition is skewed to low complexity. Residues 363–372 (DNTEGKREGY) are compositionally biased toward basic and acidic residues. Positions 375–395 (DSAQEASPARQNVSSASNPEN) are enriched in polar residues. Residues 584–596 (KKKRGRPKKQPLL) constitute a DNA-binding region (a.T hook 1). Disordered regions lie at residues 604-624 (GTST…KKRK), 722-763 (YIGK…AVPS), and 777-796 (HPLS…ASTE). The span at 779-796 (LSTQLGGSNGNLSPASTE) shows a compositional bias: polar residues. Lysine 817 carries the post-translational modification N6-acetyllysine. The segment covering 854 to 880 (SPVSESHSEETIPSDSGIGTDNNSTSD) has biased composition (polar residues). A disordered region spans residues 854 to 889 (SPVSESHSEETIPSDSGIGTDNNSTSDQAEKSSESR). A DNA-binding region (a.T hook 2) is located at residues 1016–1028 (KKKRGRPAKTNDT). Disordered stretches follow at residues 1134-1164 (PPKV…DRIL), 1202-1225 (EKNK…SKNN), 1245-1300 (AKEK…GSKR), 1325-1344 (SSYD…KVDQ), 1440-1473 (QRQS…DQMP), and 1518-1596 (EAPP…EVLP). Positions 1146–1159 (RLHKRKHKHKHKHK) are enriched in basic residues. Over residues 1450–1459 (VKKRRGRPRK) the composition is skewed to basic residues. Residues 1451–1463 (KKRRGRPRKQPTQ) constitute a DNA-binding region (a.T hook 3). 3 repeat units span residues 1520-1527 (PPLPPPPP), 1528-1535 (PPLPPPPP), and 1536-1543 (PPLPPPPP). Residues 1520–1543 (PPLPPPPPPPLPPPPPPPLPPPPP) are 3 X 8 AA tandem repeats of P-P-L-P-P-P-P-P. Composition is skewed to pro residues over residues 1520 to 1546 (PPLP…PLPK) and 1560 to 1572 (PAQP…PQQP).

In terms of assembly, interacts with SET. In terms of tissue distribution, expressed in numerous tissues. Expressed at low levels in myeloid and monocytic cells as well as in CD34+ cells; expression levels are higher in myeloid malignancies.

The protein resides in the nucleus. The chain is SET-binding protein (SETBP1) from Homo sapiens (Human).